The primary structure comprises 33 residues: uncharacterized protein (33 aa).

At 1–12 the chain is on the cytoplasmic side; it reads MKENKVQQISHK. A helical membrane pass occupies residues 13-33; it reads LINIVVFVAIVEYAYLFLHFY.

It localises to the cell inner membrane. This is an uncharacterized protein from Escherichia coli (strain K12).